Consider the following 473-residue polypeptide: ATP synthase subunit beta (473 aa).

158 to 165 (GGAGVGKT) serves as a coordination point for ATP.

The protein belongs to the ATPase alpha/beta chains family. In terms of assembly, F-type ATPases have 2 components, CF(1) - the catalytic core - and CF(0) - the membrane proton channel. CF(1) has five subunits: alpha(3), beta(3), gamma(1), delta(1), epsilon(1). CF(0) has three main subunits: a(1), b(2) and c(9-12). The alpha and beta chains form an alternating ring which encloses part of the gamma chain. CF(1) is attached to CF(0) by a central stalk formed by the gamma and epsilon chains, while a peripheral stalk is formed by the delta and b chains.

It is found in the cell membrane. It catalyses the reaction ATP + H2O + 4 H(+)(in) = ADP + phosphate + 5 H(+)(out). In terms of biological role, produces ATP from ADP in the presence of a proton gradient across the membrane. The catalytic sites are hosted primarily by the beta subunits. This is ATP synthase subunit beta from Bacillus caldotenax.